Here is a 299-residue protein sequence, read N- to C-terminus: Recombination-associated protein RdgC (299 aa).

This sequence belongs to the RdgC family.

It is found in the cytoplasm. It localises to the nucleoid. Its function is as follows. May be involved in recombination. The chain is Recombination-associated protein RdgC from Neisseria meningitidis serogroup B (strain ATCC BAA-335 / MC58).